The chain runs to 469 residues: Protein translocase subunit SecY (469 aa).

The Cytoplasmic portion of the chain corresponds to 1–20; that stretch reads MSFIDSLATLGQYLPAVTKP. A helical membrane pass occupies residues 21-47; the sequence is KEKPSLGQKLVWSLVAVIIYLIMASTP. Over 48 to 59 the chain is Extracellular; sequence LYGITSASFFKN. The segment at residues 60 to 67 is an intramembrane region (helical); the sequence is LILEQIIF. A discontinuously helical transmembrane segment spans residues 60 to 88; that stretch reads LILEQIIFASTTGTLAQLGIGPIITAGLI. Residues 68–79 lie within the membrane without spanning it; it reads ASTTGTLAQLGI. Residues 80–88 constitute an intramembrane region (helical); it reads GPIITAGLI. Residues 89–109 are Cytoplasmic-facing; the sequence is MQILAGSKLISIDLNDPDDRV. A helical membrane pass occupies residues 110-131; sequence KFTEAQKGLAFIFILVESALFG. Residues 132–146 are Extracellular-facing; the sequence is YVLARTSTTINASIL. A helical membrane pass occupies residues 147-171; sequence FIAGIVIAQLIVATYLILLLDELIQ. Topologically, residues 172 to 178 are cytoplasmic; the sequence is KGWGLGS. Residues 179–197 traverse the membrane as a helical segment; sequence GVSLFILAGVMKIMFWDMF. The Extracellular segment spans residues 198-240; it reads GIASVSSQNLPIGFFPALFTALASHSDVLNLIVNTSTKNLFQP. The chain crosses the membrane as a helical span at residues 241 to 262; that stretch reads DLVGLVTTIALIIITIYLTTMT. At 263–287 the chain is on the cytoplasmic side; the sequence is IEIPVTSQKLRGIRRTIPLNFLYVS. The helical transmembrane segment at 288 to 309 threads the bilayer; that stretch reads SIPVIFVAVLGSDIQLFASLAS. The Extracellular segment spans residues 310-347; it reads YVSPSASNILNTVSGVFFFPPPNSAIPHSIYAVVLDPL. A helical membrane pass occupies residues 348–367; it reads GALEYAVVFIVLSILFGILW. Topologically, residues 368–410 are cytoplasmic; that stretch reads VDVAGLDPATQAQQLVEAGIEIPGVRNNPKIIEGILARYIYPL. A helical transmembrane segment spans residues 411–429; it reads AFFSSIIVGLIAVFATLLG. The Extracellular portion of the chain corresponds to 430 to 432; that stretch reads AYG. The helical transmembrane segment at 433–447 threads the bilayer; it reads TGIGILLAVTIAIQY. Residues 448–469 lie on the Cytoplasmic side of the membrane; sequence YSLLAYERSLEMYPLLKRLIGE.

This sequence belongs to the SecY/SEC61-alpha family. In terms of assembly, component of the Sec protein translocase complex. Heterotrimer consisting of alpha (SecY), beta (SecG) and gamma (SecE) subunits. The heterotrimers can form oligomers, although 1 heterotrimer is thought to be able to translocate proteins. Interacts with the ribosome. May interact with SecDF, and other proteins may be involved.

It is found in the cell membrane. Functionally, the central subunit of the protein translocation channel SecYEG. Consists of two halves formed by TMs 1-5 and 6-10. These two domains form a lateral gate at the front which open onto the bilayer between TMs 2 and 7, and are clamped together by SecE at the back. The channel is closed by both a pore ring composed of hydrophobic SecY resides and a short helix (helix 2A) on the extracellular side of the membrane which forms a plug. The plug probably moves laterally to allow the channel to open. The ring and the pore may move independently. In Saccharolobus solfataricus (strain ATCC 35092 / DSM 1617 / JCM 11322 / P2) (Sulfolobus solfataricus), this protein is Protein translocase subunit SecY.